The chain runs to 702 residues: Ribosomal RNA large subunit methyltransferase K/L (702 aa).

The THUMP domain maps to 43 to 154 (LIYQSLMWSR…KETASIALDL (112 aa)).

The protein belongs to the methyltransferase superfamily. RlmKL family.

Its subcellular location is the cytoplasm. It catalyses the reaction guanosine(2445) in 23S rRNA + S-adenosyl-L-methionine = N(2)-methylguanosine(2445) in 23S rRNA + S-adenosyl-L-homocysteine + H(+). The catalysed reaction is guanosine(2069) in 23S rRNA + S-adenosyl-L-methionine = N(2)-methylguanosine(2069) in 23S rRNA + S-adenosyl-L-homocysteine + H(+). Functionally, specifically methylates the guanine in position 2445 (m2G2445) and the guanine in position 2069 (m7G2069) of 23S rRNA. The protein is Ribosomal RNA large subunit methyltransferase K/L of Salmonella gallinarum (strain 287/91 / NCTC 13346).